We begin with the raw amino-acid sequence, 33 residues long: Cytochrome b6-f complex subunit 8 (33 aa).

Residues 2–22 form a helical membrane-spanning segment; sequence LFTVAWASLAAMFSFSIAMVV.

This sequence belongs to the PetN family. As to quaternary structure, the 4 large subunits of the cytochrome b6-f complex are cytochrome b6, subunit IV (17 kDa polypeptide, PetD), cytochrome f and the Rieske protein, while the 4 small subunits are PetG, PetL, PetM and PetN. The complex functions as a dimer.

Its subcellular location is the cellular thylakoid membrane. Its function is as follows. Component of the cytochrome b6-f complex, which mediates electron transfer between photosystem II (PSII) and photosystem I (PSI), cyclic electron flow around PSI, and state transitions. The polypeptide is Cytochrome b6-f complex subunit 8 (Synechococcus sp. (strain CC9902)).